The primary structure comprises 130 residues: Ribosome-binding factor A (130 aa).

This sequence belongs to the RbfA family. Monomer. Binds 30S ribosomal subunits, but not 50S ribosomal subunits or 70S ribosomes.

The protein localises to the cytoplasm. One of several proteins that assist in the late maturation steps of the functional core of the 30S ribosomal subunit. Associates with free 30S ribosomal subunits (but not with 30S subunits that are part of 70S ribosomes or polysomes). Required for efficient processing of 16S rRNA. May interact with the 5'-terminal helix region of 16S rRNA. This is Ribosome-binding factor A from Lachnospira eligens (strain ATCC 27750 / DSM 3376 / VPI C15-48 / C15-B4) (Eubacterium eligens).